A 337-amino-acid polypeptide reads, in one-letter code: Ketol-acid reductoisomerase (NADP(+)) (337 aa).

The 180-residue stretch at 1 to 180 (MQVYYDKDAD…GGTKGGVIET (180 aa)) folds into the KARI N-terminal Rossmann domain. Residues 24–27 (YGSQ), R47, and S51 contribute to the NADP(+) site. Residue H106 is part of the active site. G132 is a binding site for NADP(+). Residues 181-326 (TFREETETDL…AQLRAMMPWI (146 aa)) form the KARI C-terminal knotted domain. Residues D189, E193, E225, and E229 each contribute to the Mg(2+) site. S250 contacts substrate.

It belongs to the ketol-acid reductoisomerase family. It depends on Mg(2+) as a cofactor.

It carries out the reaction (2R)-2,3-dihydroxy-3-methylbutanoate + NADP(+) = (2S)-2-acetolactate + NADPH + H(+). It catalyses the reaction (2R,3R)-2,3-dihydroxy-3-methylpentanoate + NADP(+) = (S)-2-ethyl-2-hydroxy-3-oxobutanoate + NADPH + H(+). It functions in the pathway amino-acid biosynthesis; L-isoleucine biosynthesis; L-isoleucine from 2-oxobutanoate: step 2/4. It participates in amino-acid biosynthesis; L-valine biosynthesis; L-valine from pyruvate: step 2/4. Its function is as follows. Involved in the biosynthesis of branched-chain amino acids (BCAA). Catalyzes an alkyl-migration followed by a ketol-acid reduction of (S)-2-acetolactate (S2AL) to yield (R)-2,3-dihydroxy-isovalerate. In the isomerase reaction, S2AL is rearranged via a Mg-dependent methyl migration to produce 3-hydroxy-3-methyl-2-ketobutyrate (HMKB). In the reductase reaction, this 2-ketoacid undergoes a metal-dependent reduction by NADPH to yield (R)-2,3-dihydroxy-isovalerate. This Neisseria meningitidis serogroup A / serotype 4A (strain DSM 15465 / Z2491) protein is Ketol-acid reductoisomerase (NADP(+)).